The chain runs to 561 residues: Sesquiterpene synthase 1 (561 aa).

Mg(2+)-binding residues include Asp-313, Asp-317, Asp-458, and Glu-466. Residues Asp-313 to Asp-317 carry the DDXXD motif motif.

This sequence belongs to the terpene synthase family. Tpsa subfamily. The cofactor is Mn(2+). Mg(2+) is required as a cofactor.

Its subcellular location is the cytoplasm. The catalysed reaction is (2E,6E)-farnesyl diphosphate = (1S,8aR)-delta-cadinene + diphosphate. Its pathway is secondary metabolite biosynthesis; terpenoid biosynthesis. Involved in the biosynthesis of delta-cadinene. The polypeptide is Sesquiterpene synthase 1 (STS1) (Thapsia garganica (Deadly carrot)).